The chain runs to 746 residues: Exocyst complex component 3-like protein (746 aa).

Residues 1–23 (MDSAAKDEMQPALSPGPEWPEQE) form a disordered region. The interval 1–370 (MDSAAKDEMQ…DVSQLEPLLT (370 aa)) is mediates interaction with EXOC2, EXOC4 and EXOC5.

The protein belongs to the SEC6 family. As to quaternary structure, interacts with EXOC2, EXOC4 and EXOC5; may be part of the exocyst.

Its subcellular location is the cytoplasmic vesicle. It is found in the secretory vesicle. Functionally, as part of the exocyst, may play a role in regulated exocytosis of insulin granules. In Homo sapiens (Human), this protein is Exocyst complex component 3-like protein (EXOC3L1).